Here is a 143-residue protein sequence, read N- to C-terminus: Nucleoside diphosphate kinase (143 aa).

Residues Lys11, Phe59, Arg87, Thr93, Arg104, and Asn114 each coordinate ATP. His117 acts as the Pros-phosphohistidine intermediate in catalysis.

It belongs to the NDK family. As to quaternary structure, homotetramer. Requires Mg(2+) as cofactor.

The protein localises to the cytoplasm. It carries out the reaction a 2'-deoxyribonucleoside 5'-diphosphate + ATP = a 2'-deoxyribonucleoside 5'-triphosphate + ADP. The enzyme catalyses a ribonucleoside 5'-diphosphate + ATP = a ribonucleoside 5'-triphosphate + ADP. Major role in the synthesis of nucleoside triphosphates other than ATP. The ATP gamma phosphate is transferred to the NDP beta phosphate via a ping-pong mechanism, using a phosphorylated active-site intermediate. This chain is Nucleoside diphosphate kinase, found in Enterobacter sp. (strain 638).